Consider the following 399-residue polypeptide: Tryptophan synthase beta chain (399 aa).

At Lys-90 the chain carries N6-(pyridoxal phosphate)lysine.

Belongs to the TrpB family. In terms of assembly, tetramer of two alpha and two beta chains. It depends on pyridoxal 5'-phosphate as a cofactor.

It catalyses the reaction (1S,2R)-1-C-(indol-3-yl)glycerol 3-phosphate + L-serine = D-glyceraldehyde 3-phosphate + L-tryptophan + H2O. Its pathway is amino-acid biosynthesis; L-tryptophan biosynthesis; L-tryptophan from chorismate: step 5/5. In terms of biological role, the beta subunit is responsible for the synthesis of L-tryptophan from indole and L-serine. The polypeptide is Tryptophan synthase beta chain (Bacillus pumilus (strain SAFR-032)).